The following is a 758-amino-acid chain: Phosphoribosylformylglycinamidine synthase subunit PurL (758 aa).

Residue H57 is part of the active site. 2 residues coordinate ATP: Y60 and R104. E106 contacts Mg(2+). Substrate is bound by residues 107 to 110 (SHNH) and R129. H108 acts as the Proton acceptor in catalysis. D130 lines the Mg(2+) pocket. Q254 lines the substrate pocket. D282 serves as a coordination point for Mg(2+). 326–328 (ESQ) is a binding site for substrate. N509 and G546 together coordinate ATP. Mg(2+) is bound at residue N547. Position 549 (S549) interacts with substrate.

It belongs to the FGAMS family. As to quaternary structure, monomer. Part of the FGAM synthase complex composed of 1 PurL, 1 PurQ and 2 PurS subunits.

It localises to the cytoplasm. It catalyses the reaction N(2)-formyl-N(1)-(5-phospho-beta-D-ribosyl)glycinamide + L-glutamine + ATP + H2O = 2-formamido-N(1)-(5-O-phospho-beta-D-ribosyl)acetamidine + L-glutamate + ADP + phosphate + H(+). The protein operates within purine metabolism; IMP biosynthesis via de novo pathway; 5-amino-1-(5-phospho-D-ribosyl)imidazole from N(2)-formyl-N(1)-(5-phospho-D-ribosyl)glycinamide: step 1/2. In terms of biological role, part of the phosphoribosylformylglycinamidine synthase complex involved in the purines biosynthetic pathway. Catalyzes the ATP-dependent conversion of formylglycinamide ribonucleotide (FGAR) and glutamine to yield formylglycinamidine ribonucleotide (FGAM) and glutamate. The FGAM synthase complex is composed of three subunits. PurQ produces an ammonia molecule by converting glutamine to glutamate. PurL transfers the ammonia molecule to FGAR to form FGAM in an ATP-dependent manner. PurS interacts with PurQ and PurL and is thought to assist in the transfer of the ammonia molecule from PurQ to PurL. The chain is Phosphoribosylformylglycinamidine synthase subunit PurL from Corynebacterium ammoniagenes (Brevibacterium ammoniagenes).